The sequence spans 288 residues: ATP synthase gamma chain (288 aa).

This sequence belongs to the ATPase gamma chain family. In terms of assembly, F-type ATPases have 2 components, CF(1) - the catalytic core - and CF(0) - the membrane proton channel. CF(1) has five subunits: alpha(3), beta(3), gamma(1), delta(1), epsilon(1). CF(0) has three main subunits: a, b and c.

The protein localises to the cell inner membrane. Its function is as follows. Produces ATP from ADP in the presence of a proton gradient across the membrane. The gamma chain is believed to be important in regulating ATPase activity and the flow of protons through the CF(0) complex. The chain is ATP synthase gamma chain from Haemophilus ducreyi (strain 35000HP / ATCC 700724).